Reading from the N-terminus, the 33-residue chain is Dermaseptin-J7 (33 aa).

Residue Val33 is modified to Valine amide.

As to expression, expressed by the skin glands.

It localises to the secreted. Its function is as follows. Has antimicrobial activity. This is Dermaseptin-J7 from Phasmahyla jandaia (Jandaia leaf frog).